Consider the following 492-residue polypeptide: Probable cobyric acid synthase (492 aa).

In terms of domain architecture, GATase cobBQ-type spans 252-444 (PIEVNIVKFS…FHGILENFEF (193 aa)). The Nucleophile role is filled by cysteine 330. Histidine 436 is an active-site residue.

Belongs to the CobB/CobQ family. CobQ subfamily.

Its pathway is cofactor biosynthesis; adenosylcobalamin biosynthesis. Functionally, catalyzes amidations at positions B, D, E, and G on adenosylcobyrinic A,C-diamide. NH(2) groups are provided by glutamine, and one molecule of ATP is hydrogenolyzed for each amidation. This is Probable cobyric acid synthase from Methanococcus maripaludis (strain C5 / ATCC BAA-1333).